The primary structure comprises 100 residues: Large ribosomal subunit protein bL27 (100 aa).

Positions Met-1–Phe-9 are excised as a propeptide.

This sequence belongs to the bacterial ribosomal protein bL27 family. Post-translationally, the N-terminus is cleaved by ribosomal processing cysteine protease Prp.

This chain is Large ribosomal subunit protein bL27, found in Clostridium botulinum (strain 657 / Type Ba4).